Here is a 521-residue protein sequence, read N- to C-terminus: MSDRVIIFDTTLRDGEQALPASLTVREKLQIALALERLGVDVMEVGFPVSSPGDFESVQTIARQIKNSRVCALSRALQKDIDAAAEALKVADQFRIHTFLATSTIHVESKLKKSFEDVLEMGINAVKYARRFTDDVEFSCEDAGRTPIDNLCRMVEAAINAGARTINIPDTVGYTIPSEFGGIIHNLFNRVPNIDKAVISVHCHDDLGLSVANSISAVQMGARQVECTINGIGERAGNTSLEEVAMILRTRQDLIGVHTNIKHQEIHRTSQLVSQLCNMPVQPNKAIVGANAFSHSSGIHQDGVLKAKNTYEIITPESVGLNQNTLNLTSRSGRHVIKHRLALLGYPEGSYDLDQIYTSFLQLADKKGQVFDYDLEALLFFSQIQEEPEHFKLNYLSVQSGGSIMATASVRMKVGDEEVTEAATGNGPVDAVYQCINRITGYEINISKYDLKSKGIGKDALGQVDIVAEFKGRKFHGMGLATDIVESSAQALVHVINNIYRALQVAEHKERFAQKTVMETL.

The Pyruvate carboxyltransferase domain maps to 5–267 (VIIFDTTLRD…HTNIKHQEIH (263 aa)). Mn(2+)-binding residues include Asp-14, His-202, His-204, and Asn-238. Residues 392–521 (KLNYLSVQSG…FAQKTVMETL (130 aa)) are regulatory domain.

It belongs to the alpha-IPM synthase/homocitrate synthase family. LeuA type 1 subfamily. In terms of assembly, homodimer. Mn(2+) serves as cofactor.

Its subcellular location is the cytoplasm. It carries out the reaction 3-methyl-2-oxobutanoate + acetyl-CoA + H2O = (2S)-2-isopropylmalate + CoA + H(+). It participates in amino-acid biosynthesis; L-leucine biosynthesis; L-leucine from 3-methyl-2-oxobutanoate: step 1/4. Its function is as follows. Catalyzes the condensation of the acetyl group of acetyl-CoA with 3-methyl-2-oxobutanoate (2-ketoisovalerate) to form 3-carboxy-3-hydroxy-4-methylpentanoate (2-isopropylmalate). This Tolumonas auensis (strain DSM 9187 / NBRC 110442 / TA 4) protein is 2-isopropylmalate synthase.